We begin with the raw amino-acid sequence, 152 residues long: Transcriptional regulator MraZ (152 aa).

SpoVT-AbrB domains are found at residues 5–52 and 81–124; these read ASAV…PLNQ and ATEC…SESE.

This sequence belongs to the MraZ family. As to quaternary structure, forms oligomers.

It is found in the cytoplasm. The protein resides in the nucleoid. This Histophilus somni (strain 2336) (Haemophilus somnus) protein is Transcriptional regulator MraZ.